The chain runs to 297 residues: Phosphatidylserine decarboxylase proenzyme (297 aa).

Catalysis depends on charge relay system; for autoendoproteolytic cleavage activity residues Asp112, His168, and Ser255. The Schiff-base intermediate with substrate; via pyruvic acid; for decarboxylase activity role is filled by Ser255. Position 255 is a pyruvic acid (Ser); by autocatalysis (Ser255).

This sequence belongs to the phosphatidylserine decarboxylase family. PSD-B subfamily. Prokaryotic type II sub-subfamily. Heterodimer of a large membrane-associated beta subunit and a small pyruvoyl-containing alpha subunit. It depends on pyruvate as a cofactor. Post-translationally, is synthesized initially as an inactive proenzyme. Formation of the active enzyme involves a self-maturation process in which the active site pyruvoyl group is generated from an internal serine residue via an autocatalytic post-translational modification. Two non-identical subunits are generated from the proenzyme in this reaction, and the pyruvate is formed at the N-terminus of the alpha chain, which is derived from the carboxyl end of the proenzyme. The autoendoproteolytic cleavage occurs by a canonical serine protease mechanism, in which the side chain hydroxyl group of the serine supplies its oxygen atom to form the C-terminus of the beta chain, while the remainder of the serine residue undergoes an oxidative deamination to produce ammonia and the pyruvoyl prosthetic group on the alpha chain. During this reaction, the Ser that is part of the protease active site of the proenzyme becomes the pyruvoyl prosthetic group, which constitutes an essential element of the active site of the mature decarboxylase.

It localises to the cell membrane. The enzyme catalyses a 1,2-diacyl-sn-glycero-3-phospho-L-serine + H(+) = a 1,2-diacyl-sn-glycero-3-phosphoethanolamine + CO2. It participates in phospholipid metabolism; phosphatidylethanolamine biosynthesis; phosphatidylethanolamine from CDP-diacylglycerol: step 2/2. Functionally, catalyzes the formation of phosphatidylethanolamine (PtdEtn) from phosphatidylserine (PtdSer). The sequence is that of Phosphatidylserine decarboxylase proenzyme from Clostridium tetani (strain Massachusetts / E88).